The following is an 853-amino-acid chain: DNA mismatch repair protein MutS (853 aa).

ATP is bound at residue 614–621 (GPNMGGKS).

It belongs to the DNA mismatch repair MutS family.

Functionally, this protein is involved in the repair of mismatches in DNA. It is possible that it carries out the mismatch recognition step. This protein has a weak ATPase activity. This Escherichia coli (strain SMS-3-5 / SECEC) protein is DNA mismatch repair protein MutS.